The chain runs to 259 residues: Putative carbamate hydrolase RutD (259 aa).

It belongs to the AB hydrolase superfamily. Hydrolase RutD family.

The enzyme catalyses carbamate + 2 H(+) = NH4(+) + CO2. Involved in pyrimidine catabolism. May facilitate the hydrolysis of carbamate, a reaction that can also occur spontaneously. The chain is Putative carbamate hydrolase RutD from Pseudomonas savastanoi pv. phaseolicola (strain 1448A / Race 6) (Pseudomonas syringae pv. phaseolicola (strain 1448A / Race 6)).